The primary structure comprises 605 residues: DNA primase (605 aa).

The segment at 38 to 62 adopts a CHC2-type zinc-finger fold; the sequence is CPFHDEKTPSFTVSEDKQICHCFGC. A Toprim domain is found at 260–341; the sequence is DEIVLLEGFM…NVFVIQLPSG (82 aa). The Mg(2+) site is built by E266, D310, and D312.

It belongs to the DnaG primase family. In terms of assembly, monomer. Interacts with DnaB. Requires Zn(2+) as cofactor. The cofactor is Mg(2+).

It catalyses the reaction ssDNA + n NTP = ssDNA/pppN(pN)n-1 hybrid + (n-1) diphosphate.. In terms of biological role, RNA polymerase that catalyzes the synthesis of short RNA molecules used as primers for DNA polymerase during DNA replication. The polypeptide is DNA primase (Staphylococcus aureus (strain MSSA476)).